The primary structure comprises 899 residues: Core protein VP3 (899 aa).

The segment at 1–22 (MAEPPDAATPKTSPYLKGDELS) is disordered.

It belongs to the orbivirus VP3 family.

Its subcellular location is the virion. Its function is as follows. The VP3 protein is one of the five proteins (with VP1, VP4, VP6 and VP7) which form the inner capsid of the virus. This is Core protein VP3 (Segment-3) from Antilocapra americana (Pronghorn).